The following is a 474-amino-acid chain: Ribulose bisphosphate carboxylase large chain (474 aa).

2 residues coordinate substrate: Asn122 and Thr172. Lys174 acts as the Proton acceptor in catalysis. Lys176 serves as a coordination point for substrate. Lys200, Asp202, and Glu203 together coordinate Mg(2+). Lys200 carries the N6-carboxylysine modification. The Proton acceptor role is filled by His293. Substrate is bound by residues Arg294, His326, and Ser378.

It belongs to the RuBisCO large chain family. Type I subfamily. As to quaternary structure, heterohexadecamer of 8 large chains and 8 small chains; disulfide-linked. The disulfide link is formed within the large subunit homodimers. Mg(2+) serves as cofactor. Post-translationally, the disulfide bond which can form in the large chain dimeric partners within the hexadecamer appears to be associated with oxidative stress and protein turnover.

Its subcellular location is the carboxysome. It catalyses the reaction 2 (2R)-3-phosphoglycerate + 2 H(+) = D-ribulose 1,5-bisphosphate + CO2 + H2O. The enzyme catalyses D-ribulose 1,5-bisphosphate + O2 = 2-phosphoglycolate + (2R)-3-phosphoglycerate + 2 H(+). RuBisCO catalyzes two reactions: the carboxylation of D-ribulose 1,5-bisphosphate, the primary event in carbon dioxide fixation, as well as the oxidative fragmentation of the pentose substrate in the photorespiration process. Both reactions occur simultaneously and in competition at the same active site. This Synechococcus sp. (strain JA-3-3Ab) (Cyanobacteria bacterium Yellowstone A-Prime) protein is Ribulose bisphosphate carboxylase large chain.